The following is a 287-amino-acid chain: Bifunctional protein FolD (287 aa).

NADP(+) is bound by residues 160–162 (GRS), Ser-189, and Thr-230.

The protein belongs to the tetrahydrofolate dehydrogenase/cyclohydrolase family. As to quaternary structure, homodimer.

The enzyme catalyses (6R)-5,10-methylene-5,6,7,8-tetrahydrofolate + NADP(+) = (6R)-5,10-methenyltetrahydrofolate + NADPH. It catalyses the reaction (6R)-5,10-methenyltetrahydrofolate + H2O = (6R)-10-formyltetrahydrofolate + H(+). The protein operates within one-carbon metabolism; tetrahydrofolate interconversion. In terms of biological role, catalyzes the oxidation of 5,10-methylenetetrahydrofolate to 5,10-methenyltetrahydrofolate and then the hydrolysis of 5,10-methenyltetrahydrofolate to 10-formyltetrahydrofolate. The polypeptide is Bifunctional protein FolD (Chlamydia muridarum (strain MoPn / Nigg)).